The sequence spans 93 residues: Alpha-defensin 6/12 (93 aa).

The signal sequence occupies residues 1–19; it reads MKTLILLSALVLLAFQVQA. The propeptide occupies 20-60; the sequence is DPIQNTDEETKTEEQPGEEDQAVSVSFGDPEGTSLQEESLR. Residues 23 to 54 form a disordered region; the sequence is QNTDEETKTEEQPGEEDQAVSVSFGDPEGTSL. 3 disulfides stabilise this stretch: cysteine 64/cysteine 92, cysteine 66/cysteine 81, and cysteine 71/cysteine 91.

Belongs to the alpha-defensin family. Paneth cells of the small bowel.

It localises to the secreted. Has broad-spectrum antimicrobial properties. Has antibacterial activity against the Gram-positive bacterium L.monocytogenes EGD and the Gram-negative bacteria E.coli ML-35p and avirulent S.typhimurium 7953, but not against the mouse-virulent S.typhimurium 14028S. Probably contributes to the antimicrobial barrier function of the small bowel mucosa. The chain is Alpha-defensin 6/12 (Defa6) from Mus musculus (Mouse).